The primary structure comprises 230 residues: Lactate utilization protein C (230 aa).

It belongs to the LutC/YkgG family.

Its function is as follows. Is involved in L-lactate degradation and allows cells to grow with lactate as the sole carbon source. The polypeptide is Lactate utilization protein C (Exiguobacterium sp. (strain ATCC BAA-1283 / AT1b)).